The sequence spans 547 residues: CTP synthase (547 aa).

Residues 1-273 (MNNKKLKSKF…DHFILNHFQL (273 aa)) are amidoligase domain. Ser19 provides a ligand contact to CTP. Residue Ser19 coordinates UTP. 20–25 (SLGKGI) provides a ligand contact to ATP. Residue Tyr60 coordinates L-glutamine. Asp77 serves as a coordination point for ATP. Asp77 and Glu147 together coordinate Mg(2+). CTP-binding positions include 154 to 156 (DIE), 194 to 199 (KTKPTQ), and Lys230. Residues 194 to 199 (KTKPTQ) and Lys230 each bind UTP. In terms of domain architecture, Glutamine amidotransferase type-1 spans 306-539 (YVILHDAYLS…VEAALLKNGK (234 aa)). Gly361 provides a ligand contact to L-glutamine. Catalysis depends on Cys388, which acts as the Nucleophile; for glutamine hydrolysis. Residues 389-392 (FGMQ), Glu412, and Arg466 each bind L-glutamine. Active-site residues include His512 and Glu514.

It belongs to the CTP synthase family. In terms of assembly, homotetramer.

The catalysed reaction is UTP + L-glutamine + ATP + H2O = CTP + L-glutamate + ADP + phosphate + 2 H(+). The enzyme catalyses L-glutamine + H2O = L-glutamate + NH4(+). It carries out the reaction UTP + NH4(+) + ATP = CTP + ADP + phosphate + 2 H(+). Its pathway is pyrimidine metabolism; CTP biosynthesis via de novo pathway; CTP from UDP: step 2/2. Allosterically activated by GTP, when glutamine is the substrate; GTP has no effect on the reaction when ammonia is the substrate. The allosteric effector GTP functions by stabilizing the protein conformation that binds the tetrahedral intermediate(s) formed during glutamine hydrolysis. Inhibited by the product CTP, via allosteric rather than competitive inhibition. Its function is as follows. Catalyzes the ATP-dependent amination of UTP to CTP with either L-glutamine or ammonia as the source of nitrogen. Regulates intracellular CTP levels through interactions with the four ribonucleotide triphosphates. This Phytoplasma australiense protein is CTP synthase.